The chain runs to 1239 residues: Inner tegument protein (1239 aa).

Positions 1–10 (MASAMESDSS) are enriched in low complexity. Disordered regions lie at residues 1–20 (MASA…DAQP), 672–708 (GESP…GGPW), and 1090–1239 (GRNA…AEDE). An interaction with large tegument protein region spans residues 618 to 1239 (NELPKTRSLA…RPPRPTAEDE (622 aa)). Low complexity predominate over residues 1115 to 1126 (DSSPFSFSSSDF). Over residues 1127–1136 (SDQDEGEGGE) the composition is skewed to acidic residues. Low complexity predominate over residues 1181–1190 (RTTPSPSRRA). A compositionally biased stretch (basic residues) spans 1219-1232 (VRPRTRRGATRRPP).

This sequence belongs to the herpesviridae inner tegument protein family. As to quaternary structure, interacts (via C-terminus) with the large tegument protein/LTP (via N-terminus).

Its subcellular location is the virion tegument. The protein resides in the host cytoplasm. It localises to the host nucleus. It is found in the host Golgi apparatus. The protein localises to the host trans-Golgi network. In terms of biological role, plays an essential role in cytoplasmic secondary envelopment during viral egress. Interacts with the capsid via the large tegument protein/LTP and participates in its transport to the host trans-Golgi network (TGN) where secondary envelopment occurs. Modulates tegumentation and capsid accumulation at the viral assembly complex. The polypeptide is Inner tegument protein (Homo sapiens (Human)).